The primary structure comprises 211 residues: ATP phosphoribosyltransferase (211 aa).

It belongs to the ATP phosphoribosyltransferase family. Short subfamily. As to quaternary structure, heteromultimer composed of HisG and HisZ subunits.

Its subcellular location is the cytoplasm. The catalysed reaction is 1-(5-phospho-beta-D-ribosyl)-ATP + diphosphate = 5-phospho-alpha-D-ribose 1-diphosphate + ATP. It functions in the pathway amino-acid biosynthesis; L-histidine biosynthesis; L-histidine from 5-phospho-alpha-D-ribose 1-diphosphate: step 1/9. Its function is as follows. Catalyzes the condensation of ATP and 5-phosphoribose 1-diphosphate to form N'-(5'-phosphoribosyl)-ATP (PR-ATP). Has a crucial role in the pathway because the rate of histidine biosynthesis seems to be controlled primarily by regulation of HisG enzymatic activity. The polypeptide is ATP phosphoribosyltransferase (Pseudomonas fluorescens (strain ATCC BAA-477 / NRRL B-23932 / Pf-5)).